The following is a 532-amino-acid chain: Methionine--tRNA ligase (532 aa).

The short motif at 16–26 (YYVNDVPHLGS) is the 'HIGH' region element. Residues Cys-131, Cys-134, Cys-149, and His-152 each contribute to the Zn(2+) site. Residues 305 to 309 (KMGKS) carry the 'KMSKS' region motif. Lys-308 contacts ATP.

It belongs to the class-I aminoacyl-tRNA synthetase family. MetG type 2A subfamily. In terms of assembly, monomer. The cofactor is Zn(2+).

The protein localises to the cytoplasm. The catalysed reaction is tRNA(Met) + L-methionine + ATP = L-methionyl-tRNA(Met) + AMP + diphosphate. Its function is as follows. Is required not only for elongation of protein synthesis but also for the initiation of all mRNA translation through initiator tRNA(fMet) aminoacylation. This chain is Methionine--tRNA ligase (metG), found in Synechocystis sp. (strain ATCC 27184 / PCC 6803 / Kazusa).